A 407-amino-acid chain; its full sequence is O-methyltransferase verK (407 aa).

Residues glutamate 263 and 295 to 297 contribute to the S-adenosyl-L-methionine site; that span reads GDF. The active-site Proton acceptor is the histidine 314.

It belongs to the class I-like SAM-binding methyltransferase superfamily. Cation-independent O-methyltransferase family.

It participates in mycotoxin biosynthesis. In terms of biological role, O-methyltransferase; part of the gene cluster that mediates the biosynthesis of 11'-deoxyverticillin A, one of the dimeric epipolythiodioxopiperazines (ETPs) from the verticillin family that act as mycotoxins. 11'-deoxyverticillin A is required for normal conidiation. The nonribosomal peptide synthetase verP is speculated to be responsible for condensation of amino acids to form the carbon skeleton of verticillin, whereas the cluster-specific tailoring enzymes are involved in further modifications leading to the production of 11'-deoxyverticillin A. The chain is O-methyltransferase verK from Clonostachys rogersoniana.